A 1070-amino-acid chain; its full sequence is DNA-directed RNA polymerase subunit beta (1070 aa).

Belongs to the RNA polymerase beta chain family. In plastids the minimal PEP RNA polymerase catalytic core is composed of four subunits: alpha, beta, beta', and beta''. When a (nuclear-encoded) sigma factor is associated with the core the holoenzyme is formed, which can initiate transcription.

The protein localises to the plastid. The protein resides in the chloroplast. It carries out the reaction RNA(n) + a ribonucleoside 5'-triphosphate = RNA(n+1) + diphosphate. In terms of biological role, DNA-dependent RNA polymerase catalyzes the transcription of DNA into RNA using the four ribonucleoside triphosphates as substrates. In Silene latifolia (White campion), this protein is DNA-directed RNA polymerase subunit beta.